Reading from the N-terminus, the 210-residue chain is Thymidylate kinase (210 aa).

ATP is bound at residue Gly-10–Ser-17.

Belongs to the thymidylate kinase family.

The enzyme catalyses dTMP + ATP = dTDP + ADP. Its function is as follows. Phosphorylation of dTMP to form dTDP in both de novo and salvage pathways of dTTP synthesis. In Haemophilus influenzae (strain PittEE), this protein is Thymidylate kinase.